A 113-amino-acid polypeptide reads, in one-letter code: Large ribosomal subunit protein bL19 (113 aa).

The protein belongs to the bacterial ribosomal protein bL19 family.

In terms of biological role, this protein is located at the 30S-50S ribosomal subunit interface and may play a role in the structure and function of the aminoacyl-tRNA binding site. This chain is Large ribosomal subunit protein bL19, found in Desulfitobacterium hafniense (strain DSM 10664 / DCB-2).